The chain runs to 466 residues: Glutamate decarboxylase beta (466 aa).

Positions 62 and 83 each coordinate substrate. Pyridoxal 5'-phosphate contacts are provided by residues 126–127 (SS), threonine 212, and histidine 275. Lysine 276 is modified (N6-(pyridoxal phosphate)lysine). N6-acetyllysine is present on residues lysine 446, lysine 453, and lysine 464.

It belongs to the group II decarboxylase family. As to quaternary structure, homohexamer composed of three dimers. Pyridoxal 5'-phosphate is required as a cofactor.

It carries out the reaction L-glutamate + H(+) = 4-aminobutanoate + CO2. Functionally, converts glutamate to gamma-aminobutyrate (GABA), consuming one intracellular proton in the reaction. The gad system helps to maintain a near-neutral intracellular pH when cells are exposed to extremely acidic conditions. The ability to survive transit through the acidic conditions of the stomach is essential for successful colonization of the mammalian host by commensal and pathogenic bacteria. The sequence is that of Glutamate decarboxylase beta (gadB) from Escherichia coli O6:H1 (strain CFT073 / ATCC 700928 / UPEC).